A 234-amino-acid polypeptide reads, in one-letter code: Mediator of RNA polymerase II transcription subunit 4 (234 aa).

Positions 71 to 124 (HQEAYRRLVEKKNEVAGLEMRVRGLVKRLEEGRKELEGMIDQGERSLEDIQKSE) form a coiled coil. The interval 188-234 (GVVGEEQKAPQKVEERREHVEHEESGRRYDPNAVFQLDLNSDESDED) is disordered. A compositionally biased stretch (basic and acidic residues) spans 189–217 (VVGEEQKAPQKVEERREHVEHEESGRRYD).

It belongs to the Mediator complex subunit 4 family. Component of the Mediator complex.

The protein resides in the nucleus. Functionally, component of the Mediator complex, a coactivator involved in the regulated transcription of nearly all RNA polymerase II-dependent genes. Mediator functions as a bridge to convey information from gene-specific regulatory proteins to the basal RNA polymerase II transcription machinery. Mediator is recruited to promoters by direct interactions with regulatory proteins and serves as a scaffold for the assembly of a functional preinitiation complex with RNA polymerase II and the general transcription factors. This Cryptococcus neoformans var. neoformans serotype D (strain B-3501A) (Filobasidiella neoformans) protein is Mediator of RNA polymerase II transcription subunit 4 (MED4).